The following is a 1166-amino-acid chain: Pesticidal crystal protein Cry1Ga (1166 aa).

The protein belongs to the delta endotoxin family.

Functionally, promotes colloidosmotic lysis by binding to the midgut epithelial cells of insects. The polypeptide is Pesticidal crystal protein Cry1Ga (cry1Ga) (Bacillus thuringiensis).